Reading from the N-terminus, the 44-residue chain is Alpha-amylase inhibitor magnificamide (44 aa).

Intrachain disulfides connect cysteine 6/cysteine 38, cysteine 16/cysteine 33, and cysteine 20/cysteine 39. An inhibitory motif region spans residues 7 to 10 (YIYH).

Belongs to the sea anemone alpha-amylase inhibitor family.

The protein localises to the secreted. Functionally, mammalian alpha-amylase (AMY2A) inhibitor. The recombinant peptide inhibits porcine pancreatic (Ki=0.17 nM) and human saliva alpha-amylases (Ki=7.7 nM). It does not show antimicrobial (tested on fungi and bacteria) or channel modulating activities (tested on 18 voltage-gated sodium and potassium channles). The protein is Alpha-amylase inhibitor magnificamide of Heteractis magnifica (Magnificent sea anemone).